The following is a 79-amino-acid chain: Protein FAM236A (79 aa).

The protein belongs to the FAM236 family.

The sequence is that of Protein FAM236A from Homo sapiens (Human).